We begin with the raw amino-acid sequence, 424 residues long: Hemagglutinin-esterase (424 aa).

A signal peptide spans 1–16 (MFLLPRFVLVSCIIGS). The segment at 7–127 (FVLVSCIIGS…SNDIWMQNKG (121 aa)) is esterase domain 1. The Virion surface segment spans residues 17-392 (LGFDNPPTNV…PICVYDPLPI (376 aa)). Ser40 serves as the catalytic Nucleophile. Cys44 and Cys65 are disulfide-bonded. Asn54, Asn89, Asn153, Asn236, and Asn301 each carry an N-linked (GlcNAc...) asparagine; by host glycan. 3 disulfide bridges follow: Cys113–Cys162, Cys197–Cys276, and Cys205–Cys249. The segment at 128-266 (LFYTQVYKNM…GNYLAISNEL (139 aa)) is receptor binding. The tract at residues 267–379 (LLTVPTKAIC…RCPTAADINT (113 aa)) is esterase domain 2. A disulfide bridge links Cys307 with Cys312. N-linked (GlcNAc...) asparagine; by host glycosylation occurs at Asn316. Catalysis depends on charge relay system residues Asp326 and His329. The cysteines at positions 347 and 371 are disulfide-linked. The N-linked (GlcNAc...) asparagine; by host glycan is linked to Asn358. A helical transmembrane segment spans residues 393–413 (ILLGILLGVAVIIIVVLLLYF). At 414–424 (MVDNGTRLHDA) the chain is on the intravirion side. The N-linked (GlcNAc...) asparagine; by host glycan is linked to Asn417.

The protein belongs to the influenza type C/coronaviruses hemagglutinin-esterase family. As to quaternary structure, homodimer; disulfide-linked. Forms a complex with the M protein in the pre-Golgi. Associates then with S-M complex to form a ternary complex S-M-HE. N-glycosylated in the host RER.

It localises to the virion membrane. Its subcellular location is the host cell membrane. The catalysed reaction is N-acetyl-9-O-acetylneuraminate + H2O = N-acetylneuraminate + acetate + H(+). It carries out the reaction N-acetyl-4-O-acetylneuraminate + H2O = N-acetylneuraminate + acetate + H(+). In terms of biological role, structural protein that makes short spikes at the surface of the virus. Contains receptor binding and receptor-destroying activities. Mediates de-O-acetylation of N-acetyl-4-O-acetylneuraminic acid, which is probably the receptor determinant recognized by the virus on the surface of erythrocytes and susceptible cells. This receptor-destroying activity is important for virus release as it probably helps preventing self-aggregation and ensures the efficient spread of the progeny virus from cell to cell. May serve as a secondary viral attachment protein for initiating infection, the spike protein being the major one. May become a target for both the humoral and the cellular branches of the immune system. The polypeptide is Hemagglutinin-esterase (Bovine coronavirus (strain 98TXSF-110-LUN) (BCoV-LUN)).